Consider the following 464-residue polypeptide: MAEPSVKKSKLTESDWISGLADDLLLQILSKVPTRESVFTSRMSKRWRNLWRHVPALDLDSSKFPHESDLEDFFDSFLQFDGNLKIERFKWIYNVEEHCDPEFVSRIDHVVKRGLKDLTILSKVNIEDDSVRMPVSLYSCATLVNLTLYSVVFDAPRAQLVSLPCLKTMHLEAVKFDGETILGTLISSCSFLDELTIITHDHDELGDVSVRSPSLRRFKLESMREDYDECEDPNVEVDTPGLEYMSITDYQSESFIIHNISPCAKVNIDVVFDAEDEDSVIHDFITAISTVRELTISARTLEMIHDYVESETELVPQFSNLFCLHASFSESSWEMFPTFLGCCPNLHSLFLEFDCLPEKEEINLSLVPHCFESSLEYVQLKVPITVSETSSKMELAIYFVRNCSVLKKLMLNESFGNVINKVRKIPKRSEGCKIAMPKPLHENVSHGSSLLPLICGFIPKILDQ.

Residues 15-62 form the F-box domain; it reads DWISGLADDLLLQILSKVPTRESVFTSRMSKRWRNLWRHVPALDLDSS. 6 LRR repeats span residues 96 to 122, 123 to 150, 152 to 178, 197 to 222, 223 to 249, and 273 to 298; these read EEHC…TILS, KVNI…TLYS, VFDA…KFDG, IITH…KLES, MRED…SITD, and DAED…TISA. One can recognise an FBD domain in the interval 359–413; it reads KEEINLSLVPHCFESSLEYVQLKVPITVSETSSKMELAIYFVRNCSVLKKLMLNE.

The polypeptide is F-box/FBD/LRR-repeat protein At1g80470 (Arabidopsis thaliana (Mouse-ear cress)).